Consider the following 353-residue polypeptide: Guanine nucleotide-binding protein subunit alpha (353 aa).

A disordered region spans residues 1 to 25 (MGCGMSTEDKEGKARNEEIENQLKR). A lipid anchor (N-myristoyl glycine) is attached at Gly-2. Residue Cys-3 is the site of S-palmitoyl cysteine attachment. The segment covering 7 to 25 (TEDKEGKARNEEIENQLKR) has biased composition (basic and acidic residues). The G-alpha domain maps to 32–353 (NEIKMLLLGA…QENLRLCGLI (322 aa)). Positions 35–48 (KMLLLGAGESGKST) are G1 motif. 14 residues coordinate GTP: Glu-43, Ser-44, Gly-45, Lys-46, Ser-47, Thr-48, Asp-150, Leu-175, Thr-181, Gly-203, Asn-269, Lys-270, Asp-272, and Ala-325. Ser-47 is a Mg(2+) binding site. The G2 motif stretch occupies residues 173-181 (DVLRSRVKT). Position 181 (Thr-181) interacts with Mg(2+). Residues 196 to 205 (YRMFDVGGQR) are G3 motif. The G4 motif stretch occupies residues 265–272 (ILFLNKID). The tract at residues 323–328 (TCATDT) is G5 motif.

It belongs to the G-alpha family. G(q) subfamily. As to quaternary structure, g proteins are composed of 3 units; alpha, beta and gamma. The alpha chain contains the guanine nucleotide binding site. Mg(2+) serves as cofactor.

Guanine nucleotide-binding proteins (G proteins) are involved as modulators or transducers in various transmembrane signaling systems. The chain is Guanine nucleotide-binding protein subunit alpha (CTG1) from Colletotrichum trifolii.